A 347-amino-acid polypeptide reads, in one-letter code: Coproporphyrinogen-III oxidase, aerobic 2 (347 aa).

A disordered region spans residues 1–31 (MGRHSDNSLQESANHTVLLTSPTNTIPKDSR). The segment covering 7 to 31 (NSLQESANHTVLLTSPTNTIPKDSR) has biased composition (polar residues). Residues 75–84 (VIREGRVFEQ) are important for dimerization. S119 is a substrate binding site. The Proton donor role is filled by H133. Substrate-binding positions include 135 to 137 (NYR) and 305 to 310 (KGRTES). The interval 287 to 322 (YVEFNLVYDRGTVFGLQTKGRTESILMSLPPLARWE) is important for dimerization.

Belongs to the aerobic coproporphyrinogen-III oxidase family. As to quaternary structure, homodimer.

Its subcellular location is the cytoplasm. The enzyme catalyses coproporphyrinogen III + O2 + 2 H(+) = protoporphyrinogen IX + 2 CO2 + 2 H2O. Its pathway is porphyrin-containing compound metabolism; protoporphyrin-IX biosynthesis; protoporphyrinogen-IX from coproporphyrinogen-III (O2 route): step 1/1. Its function is as follows. Key enzyme in heme biosynthesis. Catalyzes the oxidative decarboxylation of propionic acid side chains of rings A and B of coproporphyrinogen III. The protein is Coproporphyrinogen-III oxidase, aerobic 2 of Nostoc sp. (strain PCC 7120 / SAG 25.82 / UTEX 2576).